The sequence spans 459 residues: Uterine milk protein (459 aa).

The signal sequence occupies residues 1–25; that stretch reads MSHGRMNLALSLVFILCGLFNSIFC. Asn-268 carries N-linked (GlcNAc...) asparagine glycosylation.

Belongs to the serpin family. UTMP subfamily.

This Bos taurus (Bovine) protein is Uterine milk protein.